The primary structure comprises 241 residues: Agamous-like MADS-box protein AP1 (241 aa).

Residues 1-61 (MGRGRVQLKR…GKLFEYSTDS (61 aa)) enclose the MADS-box domain. The K-box domain maps to 88–178 (QGNWSLEYSK…AKEIKEKEKT (91 aa)).

In terms of tissue distribution, expressed in tendrils and flowers.

It is found in the nucleus. Probable transcription factor involved in flower development. The protein is Agamous-like MADS-box protein AP1 of Vitis vinifera (Grape).